The following is a 585-amino-acid chain: YTH domain-containing family protein 3 (585 aa).

3 disordered regions span residues 1-51 (MSAT…SYPP), 244-277 (KPAKPQPKLKPKGNVGIGGSAVPPPPIKHNMNIG), and 304-350 (PQPL…QPQL). The residue at position 2 (Ser-2) is an N-acetylserine. The span at 15-24 (NKVSVQNGSI) shows a compositional bias: polar residues. At Ser-23 the chain carries Phosphoserine. Residues 244–254 (KPAKPQPKLKP) are compositionally biased toward basic residues. The segment covering 329–350 (QQQQGPQPQAQPHQVQSQQPQL) has biased composition (low complexity). Residues 416–550 (GRVFIIKSYS…EKAKQVLKII (135 aa)) enclose the YTH domain. RNA-binding positions include 422 to 424 (KSY), Asp-428, 438 to 439 (WC), Asn-468, Trp-492, and Trp-497.

This sequence belongs to the YTHDF family. YTHDF3 subfamily. In terms of assembly, interacts with CNOT1; promoting recruitment of the CCR4-NOT complex. Interacts with YTHDF1. Interacts with YTHDF2. Interacts with PAN3.

It is found in the cytoplasm. Its subcellular location is the cytosol. The protein resides in the P-body. It localises to the stress granule. Its function is as follows. Specifically recognizes and binds N6-methyladenosine (m6A)-containing RNAs, and regulates their stability. M6A is a modification present at internal sites of mRNAs and some non-coding RNAs and plays a role in mRNA stability and processing. Acts as a regulator of mRNA stability by promoting degradation of m6A-containing mRNAs via interaction with the CCR4-NOT complex or PAN3. The YTHDF paralogs (YTHDF1, YTHDF2 and YTHDF3) share m6A-containing mRNAs targets and act redundantly to mediate mRNA degradation and cellular differentiation. Acts as a negative regulator of type I interferon response by down-regulating interferon-stimulated genes (ISGs) expression: acts by binding to FOXO3 mRNAs. Binds to FOXO3 mRNAs independently of METTL3-mediated m6A modification. Can also act as a regulator of mRNA stability in cooperation with YTHDF2 by binding to m6A-containing mRNA and promoting their degradation. Recognizes and binds m6A-containing circular RNAs (circRNAs); circRNAs are generated through back-splicing of pre-mRNAs, a non-canonical splicing process promoted by dsRNA structures across circularizing exons. Promotes formation of phase-separated membraneless compartments, such as P-bodies or stress granules, by undergoing liquid-liquid phase separation upon binding to mRNAs containing multiple m6A-modified residues: polymethylated mRNAs act as a multivalent scaffold for the binding of YTHDF proteins, juxtaposing their disordered regions and thereby leading to phase separation. The resulting mRNA-YTHDF complexes then partition into different endogenous phase-separated membraneless compartments, such as P-bodies, stress granules or neuronal RNA granules. May also recognize and bind N1-methyladenosine (m1A)-containing mRNAs: inhibits trophoblast invasion by binding to m1A-methylated transcripts of IGF1R, promoting their degradation. This chain is YTH domain-containing family protein 3, found in Mus musculus (Mouse).